The following is a 142-amino-acid chain: MMKLYIVFGFIAFSAAYVVPEGYYEPEYYPADGYESERVARASPAELIFDEDLADEPEVEEPQYYIRTRRSLQPGAPNFPMPGSQLPTSITSNIEKQGPNTAATINAQHKTDRYDVGATWSKVIRGPGRSKPNWSIGGTYRW.

A signal peptide spans 1 to 16 (MMKLYIVFGFIAFSAA). The propeptide occupies 17 to 70 (YVVPEGYYEPEYYPADGYESERVARASPAELIFDEDLADEPEVEEPQYYIRTRR). The disordered stretch occupies residues 72-96 (LQPGAPNFPMPGSQLPTSITSNIEK). Residues 85–96 (QLPTSITSNIEK) show a composition bias toward polar residues.

Belongs to the coleoptericin family. Strongly expressed in the fat body and the Malpighian tubules, and weakly expressed in hemocytes and midgut.

The protein resides in the secreted. In terms of biological role, has strong antibacterial activity against E.coli, Streptococcus pyogenes, Staphylococcus aureus but not against Pseudomonas aeruginosa. The sequence is that of Rhinocerosin from Oryctes rhinoceros (Coconut rhinoceros beetle).